The following is a 481-amino-acid chain: Transmembrane protein 39A (481 aa).

Transmembrane regions (helical) follow at residues 74–94, 109–129, 150–170, 182–202, 278–298, 313–333, 411–431, and 437–457; these read LFET…YINI, STSL…AVML, LCYV…GWVL, SVLK…LCCL, EVLF…LCFV, LIMV…PPHY, LLNV…YSLL, and NHTL…FKLL.

It belongs to the TMEM39 family.

The protein resides in the endoplasmic reticulum membrane. Its function is as follows. Regulates autophagy by controlling the spatial distribution and levels of the intracellular phosphatidylinositol 4-phosphate (PtdIns(4)P) pools. Modulates (PtdIns(4)P) levels by regulating the ER-to-Golgi trafficking of the phosphatidylinositide phosphatase SACM1L. In Danio rerio (Zebrafish), this protein is Transmembrane protein 39A (tmem39a).